Consider the following 298-residue polypeptide: MADDWDLHAVVRGCSAVSSSATTTVYSPGVSSHTNPIFTVGRQSNAVSFGEIRDLYTPFTQESVVSSFSCINYPEEPRKPQNQKRPLSLSASSGSVTSKPSGSNTSRSKRRKIQHKKVCHVAAEALNSDVWAWRKYGQKPIKGSPYPRGYYRCSTSKGCLARKQVERNRSDPKMFIVTYTAEHNHPAPTHRNSLAGSTRQKPSDQQTSKSPTTTIATYSSSPVTSADEFVLPVEDHLAVGDLDGEEDLLSLSDTVVSDDFFDGLEEFAAGDSFSGNSAPASFDLSWVVNSAATTTGGI.

2 disordered regions span residues 75-116 (EEPR…IQHK) and 181-220 (AEHN…TYSS). Positions 88 to 103 (SLSASSGSVTSKPSGS) are enriched in low complexity. Over residues 107–116 (RSKRRKIQHK) the composition is skewed to basic residues. Positions 122 to 188 (AAEALNSDVW…YTAEHNHPAP (67 aa)) form a DNA-binding region, WRKY. The segment covering 190-220 (HRNSLAGSTRQKPSDQQTSKSPTTTIATYSS) has biased composition (polar residues).

This sequence belongs to the WRKY group II-e family.

The protein resides in the nucleus. Its function is as follows. Transcription factor involved in the expression of defense genes in innate immune response of plants. Interacts specifically with the W box (5'-(T)TGAC[CT]-3'), a frequently occurring elicitor-responsive cis-acting element. Activates WRKY 29, SIRK and its own promoters. The chain is WRKY transcription factor 22 (WRKY22) from Arabidopsis thaliana (Mouse-ear cress).